A 418-amino-acid polypeptide reads, in one-letter code: Serine hydroxymethyltransferase (418 aa).

(6S)-5,6,7,8-tetrahydrofolate contacts are provided by residues leucine 121 and 125–127 (GHL). N6-(pyridoxal phosphate)lysine is present on lysine 230. 356–358 (SPF) lines the (6S)-5,6,7,8-tetrahydrofolate pocket.

It belongs to the SHMT family. In terms of assembly, homodimer. Pyridoxal 5'-phosphate is required as a cofactor.

Its subcellular location is the cytoplasm. It catalyses the reaction (6R)-5,10-methylene-5,6,7,8-tetrahydrofolate + glycine + H2O = (6S)-5,6,7,8-tetrahydrofolate + L-serine. The protein operates within one-carbon metabolism; tetrahydrofolate interconversion. Its pathway is amino-acid biosynthesis; glycine biosynthesis; glycine from L-serine: step 1/1. In terms of biological role, catalyzes the reversible interconversion of serine and glycine with tetrahydrofolate (THF) serving as the one-carbon carrier. This reaction serves as the major source of one-carbon groups required for the biosynthesis of purines, thymidylate, methionine, and other important biomolecules. Also exhibits THF-independent aldolase activity toward beta-hydroxyamino acids, producing glycine and aldehydes, via a retro-aldol mechanism. This Shewanella woodyi (strain ATCC 51908 / MS32) protein is Serine hydroxymethyltransferase.